A 114-amino-acid chain; its full sequence is UPF0102 protein HPSH_02690 (114 aa).

It belongs to the UPF0102 family.

The chain is UPF0102 protein HPSH_02690 from Helicobacter pylori (strain Shi470).